Here is a 109-residue protein sequence, read N- to C-terminus: Parvalbumin alpha (109 aa).

Serine 1 carries the N-acetylserine modification. EF-hand domains follow at residues lysine 38 to glycine 73 and leucine 77 to threonine 109. The Ca(2+) site is built by aspartate 51, aspartate 53, serine 55, tyrosine 57, glutamate 59, glutamate 62, aspartate 90, aspartate 92, aspartate 94, lysine 96, and glutamate 101.

It belongs to the parvalbumin family. Monomer.

In muscle, parvalbumin is thought to be involved in relaxation after contraction. It binds two calcium ions. The protein is Parvalbumin alpha of Raja clavata (Thornback ray).